Here is a 182-residue protein sequence, read N- to C-terminus: NADH-quinone oxidoreductase subunit I (182 aa).

4Fe-4S ferredoxin-type domains are found at residues 52–82 (LTRD…LQKA) and 92–121 (DFFR…LTPD). The [4Fe-4S] cluster site is built by Cys62, Cys65, Cys68, Cys72, Cys101, Cys104, Cys107, and Cys111.

Belongs to the complex I 23 kDa subunit family. As to quaternary structure, NDH-1 is composed of 13 different subunits. Subunits NuoA, H, J, K, L, M, N constitute the membrane sector of the complex. [4Fe-4S] cluster is required as a cofactor.

It localises to the cell inner membrane. It catalyses the reaction a quinone + NADH + 5 H(+)(in) = a quinol + NAD(+) + 4 H(+)(out). NDH-1 shuttles electrons from NADH, via FMN and iron-sulfur (Fe-S) centers, to quinones in the respiratory chain. The immediate electron acceptor for the enzyme in this species is believed to be ubiquinone. Couples the redox reaction to proton translocation (for every two electrons transferred, four hydrogen ions are translocated across the cytoplasmic membrane), and thus conserves the redox energy in a proton gradient. The polypeptide is NADH-quinone oxidoreductase subunit I (Pseudomonas fluorescens (strain ATCC BAA-477 / NRRL B-23932 / Pf-5)).